A 1451-amino-acid chain; its full sequence is Fanconi anemia group D2 protein (1451 aa).

The disordered stretch occupies residues 1–37 (MVSKRRLSKSEDKESLTEDASKTRKQPLSKKTKKSHI). An interaction with FANCE region spans residues 1–291 (MVSKRRLSKS…IKFILHSVTA (291 aa)). Ser-8 carries the post-translational modification Phosphoserine. The segment covering 8–22 (SKSEDKESLTEDASK) has biased composition (basic and acidic residues). Positions 23–36 (TRKQPLSKKTKKSH) are enriched in basic residues. Ser-222 bears the Phosphoserine; by ATM mark. Residues 248–359 (VLSSLRLDPN…IKSAIRYEKT (112 aa)) are interaction with BRCA2. Residue Lys-561 forms a Glycyl lysine isopeptide (Lys-Gly) (interchain with G-Cter in ubiquitin) linkage. 3 positions are modified to phosphoserine: Ser-592, Ser-594, and Ser-717. Residues 868 to 906 (IERKQKTDGSKTSSSDTLSEEKNSECDPTPSHRGQLNKE) are disordered. Ser-1257 carries the phosphoserine modification. The tract at residues 1396–1451 (GEEIKSQNSQESTADESEDDMSSQASKSKATEDGEEDEVSAGEKEQDSDESYDDSD) is disordered. A phosphoserine; by ATM mark is found at Ser-1401 and Ser-1404. Phosphoserine occurs at positions 1412 and 1423. The residue at position 1426 (Thr-1426) is a Phosphothreonine. Residues 1428–1451 (DGEEDEVSAGEKEQDSDESYDDSD) show a composition bias toward acidic residues. A Phosphoserine modification is found at Ser-1435.

The protein belongs to the Fanconi anemia protein FANCD2 family. Homodimer; cannot be ubiquitinated and does not bind DNA. Part of a FANCI-FANCD2 heterodimeric complex that binds and scans dsDNA for DNA damage. Interacts directly with FANCE and FANCI. Interacts with USP1 and MEN1. The ubiquitinated form specifically interacts with BRCA1 and BLM. Both the nonubiquitinated and the monoubiquitinated forms interact with BRCA2; this interaction is mediated by phosphorylated FANCG and the complex also includes XCCR3. The ubiquitinated form specifically interacts with MTMR15/FAN1 (via UBZ-type zinc finger), leading to recruit MTMR15/FAN1 to sites of DNA damage. Interacts with DCLRE1B/Apollo. Interacts with POLN. Interacts with UHRF1 and UHRF2; these interactions promote FANCD2 activation. Monoubiquitinated on Lys-561 during S phase and upon genotoxic stress by FANCL in complex with E2 ligases UBE2T or UBE2W (isoform 1 and isoform 2). Deubiquitinated by USP1 as cells enter G2/M, or once DNA repair is completed. Monoubiquitination requires the joint intervention of the FANC core complex, including FANCA, FANCB, FANCC, FANCE, FANCF, FANCG, and FANCM, and proteins involved in cell cycle checkpoints and DNA repair, including RPA1, ATR, CHEK1 and BRCA1, and is mediated by FANCL/PHF9. Monoubiquitination prevents DNA release from the FANCI-FANCD2 complex. FANCD2 is only ubiquitinated in the FANCI-FANCD2 complex and the monoubiquitination of FANCD2 is promoted by phosphorylation of FANCI. Ubiquitination is required for binding to chromatin, interaction with BRCA1, BRCA2 and MTMR15/FAN1, DNA repair, and normal cell cycle progression, but not for phosphorylation on Ser-222 or interaction with MEN1. Post-translationally, phosphorylated in response to various genotoxic stresses by ATM and/or ATR. Upon ionizing radiation, phosphorylated by ATM on Ser-222 and Ser-1404. Phosphorylation on Ser-222 is required for S-phase checkpoint activation, but not for ubiquitination, foci formation, or DNA repair. In contrast, phosphorylation by ATR on other sites may be required for ubiquitination and foci formation. As to expression, highly expressed in germinal center cells of the spleen, tonsil, and reactive lymph nodes, and in the proliferating basal layer of squamous epithelium of tonsil, esophagus, oropharynx, larynx and cervix. Expressed in cytotrophoblastic cells of the placenta and exocrine cells of the pancreas (at protein level). Highly expressed in testis, where expression is restricted to maturing spermatocytes.

The protein resides in the nucleus. Functionally, required for maintenance of chromosomal stability. Promotes accurate and efficient pairing of homologs during meiosis. Involved in the repair of DNA double-strand breaks, both by homologous recombination and single-strand annealing. The FANCI-FANCD2 complex binds and scans double-stranded DNA (dsDNA) for DNA damage; this complex stalls at DNA junctions between double-stranded DNA and single-stranded DNA. May participate in S phase and G2 phase checkpoint activation upon DNA damage. Plays a role in preventing breakage and loss of missegregating chromatin at the end of cell division, particularly after replication stress. Required for the targeting, or stabilization, of BLM to non-centromeric abnormal structures induced by replicative stress. Promotes BRCA2/FANCD1 loading onto damaged chromatin. May also be involved in B-cell immunoglobulin isotype switching. The chain is Fanconi anemia group D2 protein (FANCD2) from Homo sapiens (Human).